We begin with the raw amino-acid sequence, 68 residues long: Erythrodihydroneopterin triphosphate synthetase (68 aa).

Phosphoserine is present on Ser-66.

This Cavia porcellus (Guinea pig) protein is Erythrodihydroneopterin triphosphate synthetase.